The sequence spans 143 residues: D-aminoacyl-tRNA deacylase (143 aa).

The Gly-cisPro motif, important for rejection of L-amino acids motif lies at 135-136; sequence GP.

This sequence belongs to the DTD family. Homodimer.

The protein localises to the cytoplasm. The catalysed reaction is glycyl-tRNA(Ala) + H2O = tRNA(Ala) + glycine + H(+). It carries out the reaction a D-aminoacyl-tRNA + H2O = a tRNA + a D-alpha-amino acid + H(+). Functionally, an aminoacyl-tRNA editing enzyme that deacylates mischarged D-aminoacyl-tRNAs. Also deacylates mischarged glycyl-tRNA(Ala), protecting cells against glycine mischarging by AlaRS. Acts via tRNA-based rather than protein-based catalysis; rejects L-amino acids rather than detecting D-amino acids in the active site. By recycling D-aminoacyl-tRNA to D-amino acids and free tRNA molecules, this enzyme counteracts the toxicity associated with the formation of D-aminoacyl-tRNA entities in vivo and helps enforce protein L-homochirality. This chain is D-aminoacyl-tRNA deacylase, found in Nocardia farcinica (strain IFM 10152).